Here is a 207-residue protein sequence, read N- to C-terminus: MARYIGPKAKLSRREGTDLFLKSARRSLDSKCKLDSKPGQHGRTSGARTSDYGNQLREKQKVKRMYGILERQFRRYFAEADRRKGNTGETLLKLLEARLDNVVYRMGFGSTRAEGRQLVSHKAFTVNGIVVNIASYQVKPGDVIAVREKSKKQVRIVEALSLAEQSGMPSWVSVDAKKMEGTYKAAPDRSEIANDVNESLIVELYSR.

The disordered stretch occupies residues 31-56; sequence KCKLDSKPGQHGRTSGARTSDYGNQL. The segment covering 42-53 has biased composition (polar residues); that stretch reads GRTSGARTSDYG. Residues 97-157 form the S4 RNA-binding domain; that stretch reads ARLDNVVYRM…EKSKKQVRIV (61 aa).

The protein belongs to the universal ribosomal protein uS4 family. Part of the 30S ribosomal subunit. Contacts protein S5. The interaction surface between S4 and S5 is involved in control of translational fidelity.

In terms of biological role, one of the primary rRNA binding proteins, it binds directly to 16S rRNA where it nucleates assembly of the body of the 30S subunit. With S5 and S12 plays an important role in translational accuracy. The sequence is that of Small ribosomal subunit protein uS4 from Janthinobacterium sp. (strain Marseille) (Minibacterium massiliensis).